A 1037-amino-acid chain; its full sequence is uncharacterized protein (1037 aa).

This is an uncharacterized protein from Saccharomyces cerevisiae (strain ATCC 204508 / S288c) (Baker's yeast).